The following is a 201-amino-acid chain: Small ribosomal subunit protein uS4c (201 aa).

In terms of domain architecture, S4 RNA-binding spans 91-151 (MRLDNIIFQL…TKNPEELRTI (61 aa)).

The protein belongs to the universal ribosomal protein uS4 family. Part of the 30S ribosomal subunit. Contacts protein S5. The interaction surface between S4 and S5 is involved in control of translational fidelity.

It localises to the plastid. The protein resides in the chloroplast. In terms of biological role, one of the primary rRNA binding proteins, it binds directly to 16S rRNA where it nucleates assembly of the body of the 30S subunit. Functionally, with S5 and S12 plays an important role in translational accuracy. The sequence is that of Small ribosomal subunit protein uS4c (rps4) from Welwitschia mirabilis (Tree tumbo).